A 414-amino-acid polypeptide reads, in one-letter code: NADH-quinone oxidoreductase subunit D (414 aa).

Belongs to the complex I 49 kDa subunit family. In terms of assembly, NDH-1 is composed of 14 different subunits. Subunits NuoB, C, D, E, F, and G constitute the peripheral sector of the complex.

The protein resides in the cell inner membrane. The enzyme catalyses a quinone + NADH + 5 H(+)(in) = a quinol + NAD(+) + 4 H(+)(out). Its function is as follows. NDH-1 shuttles electrons from NADH, via FMN and iron-sulfur (Fe-S) centers, to quinones in the respiratory chain. The immediate electron acceptor for the enzyme in this species is believed to be ubiquinone. Couples the redox reaction to proton translocation (for every two electrons transferred, four hydrogen ions are translocated across the cytoplasmic membrane), and thus conserves the redox energy in a proton gradient. This chain is NADH-quinone oxidoreductase subunit D, found in Akkermansia muciniphila (strain ATCC BAA-835 / DSM 22959 / JCM 33894 / BCRC 81048 / CCUG 64013 / CIP 107961 / Muc).